The chain runs to 307 residues: 4-diphosphocytidyl-2-C-methyl-D-erythritol kinase (307 aa).

Lys-9 is a catalytic residue. 94-104 (PIGAGLAGGSS) is an ATP binding site. The active site involves Asp-136.

The protein belongs to the GHMP kinase family. IspE subfamily.

The catalysed reaction is 4-CDP-2-C-methyl-D-erythritol + ATP = 4-CDP-2-C-methyl-D-erythritol 2-phosphate + ADP + H(+). It functions in the pathway isoprenoid biosynthesis; isopentenyl diphosphate biosynthesis via DXP pathway; isopentenyl diphosphate from 1-deoxy-D-xylulose 5-phosphate: step 3/6. Its function is as follows. Catalyzes the phosphorylation of the position 2 hydroxy group of 4-diphosphocytidyl-2C-methyl-D-erythritol. The sequence is that of 4-diphosphocytidyl-2-C-methyl-D-erythritol kinase from Synechococcus sp. (strain CC9605).